The following is a 195-amino-acid chain: Translation initiation factor IF-3 (195 aa).

The tract at residues 158–195 (EQSEVQQRPKREGRNMIMFLSPRKTPLIKKEEDAKENN) is disordered. Over residues 185-195 (IKKEEDAKENN) the composition is skewed to basic and acidic residues.

This sequence belongs to the IF-3 family. In terms of assembly, monomer.

The protein localises to the cytoplasm. Functionally, IF-3 binds to the 30S ribosomal subunit and shifts the equilibrium between 70S ribosomes and their 50S and 30S subunits in favor of the free subunits, thus enhancing the availability of 30S subunits on which protein synthesis initiation begins. This Prochlorococcus marinus (strain MIT 9515) protein is Translation initiation factor IF-3.